The chain runs to 375 residues: N-acetylneuraminate epimerase (375 aa).

The first 22 residues, 1–22, serve as a signal peptide directing secretion; it reads MKLTKTALCTALFATFTFSANA. Kelch repeat units follow at residues 43–87, 89–140, 142–176, 177–222, 225–273, 295–344, and 346–375; these read TVYV…AAVD, KLYV…ASHG, KVYI…EIVA, AYFD…TIQG, LVVV…LAGA, KQFK…SYNN, and VLLI…LTVE. Catalysis depends on E231, which acts as the Proton acceptor.

This sequence belongs to the NanM family. Homodimer.

The protein resides in the periplasm. The catalysed reaction is N-acetyl-alpha-neuraminate = N-acetyl-beta-neuraminate. Converts alpha-N-acetylneuranimic acid (Neu5Ac) to the beta-anomer, accelerating the equilibrium between the alpha- and beta-anomers. Probably facilitates sialidase-negative bacteria to compete successfully for limited amounts of extracellular Neu5Ac, which is likely taken up in the beta-anomer. In addition, the rapid removal of sialic acid from solution might be advantageous to the bacterium to damp down host responses. The polypeptide is N-acetylneuraminate epimerase (Haemophilus influenzae (strain 86-028NP)).